Reading from the N-terminus, the 456-residue chain is RuvB-like 1 (456 aa).

A disordered region spans residues 1 to 20 (MKIEEVKSTTKTQRIASHSH). Residue 70–77 (GPPGTGKT) participates in ATP binding.

The protein belongs to the RuvB family. In terms of assembly, forms homohexameric rings. Can form a dodecamer with ruvbl2 made of two stacked hexameric rings. Is a component of the RNA polymerase II holoenzyme complex. Component of the chromatin-remodeling Ino80 complex. Component of some MLL1/MLL complex.

It is found in the nucleus. Its subcellular location is the dynein axonemal particle. It catalyses the reaction ATP + H2O = ADP + phosphate + H(+). Functionally, has single-stranded DNA-stimulated ATPase and ATP-dependent DNA helicase (3' to 5') activity suggesting a role in nuclear processes such as recombination and transcription. Proposed core component of the chromatin remodeling Ino80 complex which exhibits DNA- and nucleosome-activated ATPase activity and catalyzes ATP-dependent nucleosome sliding. May act as a negative regulator of embryonic heart growth. This is RuvB-like 1 (ruvbl1) from Danio rerio (Zebrafish).